The primary structure comprises 352 residues: MNTLLMHCRPGFEGEVCAEIAEHAATLEIPGYARSKPASAHVEFVCQDVDGAERLMRRLRFAELIFPRQWARGPGFIELPESQRIEVLLEELASYPVCGSLWLEVLDTNAGKEVSTFCRKFEKPLRAALVKAGRLQEDLALPRLLLTFRSGREVFVGLAEPRNSALWPMGIPRLKFPREAPSRSTLKLEEAWHQFIPRQEWDKRLAPDMLAVDLGAAPGGWTWQLVNREMRVTAVDNGPMAENLMYSGLVDHQKVDGYQYRPRQRVDWMVCDIVEKPARTGALIETWIGEGLCREAVVNLKLPMKQRYAEVRKILQRLRESFDARGLKVAFGCKQLYHDREEVTCHLRRLER.

Residues serine 184, 217 to 220, aspartate 236, aspartate 256, and aspartate 272 each bind S-adenosyl-L-methionine; that span reads APGG. The Proton acceptor role is filled by lysine 301.

Belongs to the class I-like SAM-binding methyltransferase superfamily. RNA methyltransferase RlmE family. RlmM subfamily. In terms of assembly, monomer.

It localises to the cytoplasm. It catalyses the reaction cytidine(2498) in 23S rRNA + S-adenosyl-L-methionine = 2'-O-methylcytidine(2498) in 23S rRNA + S-adenosyl-L-homocysteine + H(+). Its function is as follows. Catalyzes the 2'-O-methylation at nucleotide C2498 in 23S rRNA. This is Ribosomal RNA large subunit methyltransferase M from Pseudomonas paraeruginosa (strain DSM 24068 / PA7) (Pseudomonas aeruginosa (strain PA7)).